Here is an 89-residue protein sequence, read N- to C-terminus: Small ribosomal subunit protein uS14B (89 aa).

A disordered region spans residues 38–61 (KLPKDAHPSRLKLRDQTDGRPRGY). Residues 39–58 (LPKDAHPSRLKLRDQTDGRP) show a composition bias toward basic and acidic residues.

The protein belongs to the universal ribosomal protein uS14 family. In terms of assembly, part of the 30S ribosomal subunit. Contacts proteins S3 and S10.

In terms of biological role, binds 16S rRNA, required for the assembly of 30S particles and may also be responsible for determining the conformation of the 16S rRNA at the A site. This is Small ribosomal subunit protein uS14B from Enterococcus faecalis (strain ATCC 700802 / V583).